The sequence spans 344 residues: UDP-N-acetylenolpyruvoylglucosamine reductase (344 aa).

One can recognise an FAD-binding PCMH-type domain in the interval 19 to 189 (INVTAKKIIF…IAVGIKIKKN (171 aa)). R165 is an active-site residue. S235 serves as the catalytic Proton donor. E331 is an active-site residue.

Belongs to the MurB family. Requires FAD as cofactor.

It is found in the cytoplasm. The enzyme catalyses UDP-N-acetyl-alpha-D-muramate + NADP(+) = UDP-N-acetyl-3-O-(1-carboxyvinyl)-alpha-D-glucosamine + NADPH + H(+). Its pathway is cell wall biogenesis; peptidoglycan biosynthesis. Cell wall formation. The protein is UDP-N-acetylenolpyruvoylglucosamine reductase of Buchnera aphidicola subsp. Schizaphis graminum (strain Sg).